The sequence spans 54 residues: Large ribosomal subunit protein bL32c (54 aa).

This sequence belongs to the bacterial ribosomal protein bL32 family.

The protein localises to the plastid. It is found in the chloroplast. This is Large ribosomal subunit protein bL32c from Gossypium barbadense (Sea Island cotton).